Here is a 227-residue protein sequence, read N- to C-terminus: Transmembrane emp24 domain-containing protein 1 (227 aa).

The signal sequence occupies residues 1–23 (MMAAGAALALALWLLMPPVEVGG). Topologically, residues 24–194 (AGPPPIQDGE…LQEGNLERVN (171 aa)) are extracellular. The 83-residue stretch at 43–125 (KQCFYQSAPA…EKLVFFELIF (83 aa)) folds into the GOLD domain. A coiled-coil region spans residues 145–170 (EMLDVKMEDIKESIETMRTRLERSIQ). Residues 195–215 (FWSAVNVAVLLLVAVLQVCTL) form a helical membrane-spanning segment. At 216–227 (KRFFQDKRPVPT) the chain is on the cytoplasmic side. Positions 218–219 (FF) match the COPII vesicle coat-binding motif. The COPI vesicle coat-binding signature appears at 218–227 (FFQDKRPVPT).

The protein belongs to the EMP24/GP25L family. Homodimer in endoplasmic reticulum, endoplasmic reticulum-Golgi intermediate compartment and cis-Golgi network. Interacts with IL1RL1. Interacts with RNF26; this interaction is important to modulate innate immune signaling through the cGAS-STING pathway. As to expression, widely expressed.

The protein resides in the cell membrane. The protein localises to the endoplasmic reticulum membrane. It is found in the golgi apparatus. Its subcellular location is the cis-Golgi network membrane. It localises to the endoplasmic reticulum-Golgi intermediate compartment membrane. Its function is as follows. Potential role in vesicular protein trafficking, mainly in the early secretory pathway. May act as a cargo receptor at the lumenal side for incorporation of secretory cargo molecules into transport vesicles and may be involved in vesicle coat formation at the cytoplasmic side. Plays a positive role in IL-33-mediated IL-8 and IL-6 production by interacting with interleukin-33 receptor IL1RL1. Also plays a role in the modulation of innate immune signaling through the cGAS-STING pathway by interacting with RNF26. The chain is Transmembrane emp24 domain-containing protein 1 (TMED1) from Homo sapiens (Human).